The chain runs to 103 residues: uncharacterized protein (103 aa).

Disordered stretches follow at residues 1 to 20 (MIELSYAPDVAGRRSNWPKG) and 44 to 71 (LERMASDTHGGGGGRPVTPPPPGMHHLG). A signal peptide spans 1-34 (MIELSYAPDVAGRRSNWPKGSGVNTWTAIRWTFA).

This is an uncharacterized protein from Mycobacterium tuberculosis (strain CDC 1551 / Oshkosh).